We begin with the raw amino-acid sequence, 288 residues long: Oxaloacetate decarboxylase (288 aa).

Ser47 serves as a coordination point for substrate. Position 85 (Asp85) interacts with Mg(2+). Substrate is bound by residues Arg156 and His232.

This sequence belongs to the isocitrate lyase/PEP mutase superfamily. Oxaloacetate decarboxylase family. Homotetramer; dimer of dimers. The cofactor is Mg(2+).

It carries out the reaction oxaloacetate + H(+) = pyruvate + CO2. In terms of biological role, catalyzes the decarboxylation of oxaloacetate into pyruvate. Seems to play a role in maintaining cellular concentrations of bicarbonate and pyruvate. This is Oxaloacetate decarboxylase from Rhodopseudomonas palustris (strain ATCC BAA-98 / CGA009).